Reading from the N-terminus, the 228-residue chain is Large ribosomal subunit protein bL25 (228 aa).

Residues 196–228 (EEAAVAEAQSAESAEGKAEAEAEATNEKNKSEA) are disordered. The segment covering 209-228 (AEGKAEAEAEATNEKNKSEA) has biased composition (basic and acidic residues).

This sequence belongs to the bacterial ribosomal protein bL25 family. CTC subfamily. In terms of assembly, part of the 50S ribosomal subunit; part of the 5S rRNA/L5/L18/L25 subcomplex. Contacts the 5S rRNA. Binds to the 5S rRNA independently of L5 and L18.

In terms of biological role, this is one of the proteins that binds to the 5S RNA in the ribosome where it forms part of the central protuberance. In Methylorubrum extorquens (strain PA1) (Methylobacterium extorquens), this protein is Large ribosomal subunit protein bL25.